Reading from the N-terminus, the 238-residue chain is Serine protease SplE (238 aa).

The N-terminal stretch at 1–36 (MNKNIIIKSIAALTILTSVTGVGTTVVEGIQQTAKA) is a signal peptide. Residues histidine 75, aspartate 113, and serine 191 each act as charge relay system in the active site.

This sequence belongs to the peptidase S1B family.

The protein localises to the secreted. The sequence is that of Serine protease SplE (splE) from Staphylococcus aureus (strain USA300).